The following is a 303-amino-acid chain: Probable cell division protein WhiA (303 aa).

The segment at residues 272–303 (SIQQLADSLSRPLTKSGVNHRLRKINKIADEL) is a DNA-binding region (H-T-H motif).

Belongs to the WhiA family.

Its function is as follows. Involved in cell division and chromosome segregation. The polypeptide is Probable cell division protein WhiA (Streptococcus sanguinis (strain SK36)).